An 870-amino-acid polypeptide reads, in one-letter code: Radial spoke head 10 homolog B2 (870 aa).

Over residues 1 to 16 (MVKEKKKADKKGEKSA) the composition is skewed to basic and acidic residues. The tract at residues 1–44 (MVKEKKKADKKGEKSARSPSSLSDNLDFSKQDGNTTRQEMSPAG) is disordered. A compositionally biased stretch (polar residues) spans 17 to 39 (RSPSSLSDNLDFSKQDGNTTRQE). 10 MORN repeats span residues 86–108 (YEGE…GGCT), 109–131 (YRGM…DGLK), 132–154 (YEGD…DGSM), 155–177 (YEGE…TQPV), 179–201 (YIGH…QEGT), 204–226 (YEGD…SGNI), 227–249 (YEGQ…TTNE), 251–273 (YTGR…LKRI), 284–306 (YIGE…SGAM), and 307–329 (YDGE…NGRV). A disordered region spans residues 674–704 (NKSPSAVMSHESDAAHSDSARSSSSKLELSP). The segment covering 683–692 (HESDAAHSDS) has biased composition (basic and acidic residues). Low complexity predominate over residues 693 to 703 (ARSSSSKLELS). The stretch at 784–811 (KEKIRADRLRSTAQAQQRKMEDDELEAR) forms a coiled coil. Residues 840-870 (VSSSHLILDPPKEDVTVSPSSKTITSKKKKK) are disordered.

In terms of assembly, interacts with RSPH6A. Does not appear to be part of the axonemal radial spoke complexes 1 or 2.

It is found in the cytoplasm. The protein localises to the cytoskeleton. It localises to the cilium axoneme. The protein resides in the cell projection. Its subcellular location is the cilium. It is found in the flagellum. In terms of biological role, may function as part of the axonemal radial spoke complex 3 (RS3). Radial spoke complexes are important for ciliary motility. The polypeptide is Radial spoke head 10 homolog B2 (RSPH10B2) (Homo sapiens (Human)).